Reading from the N-terminus, the 418-residue chain is Putative L-glutamine:3-amino-2,3-dideoxy-scyllo-inosose aminotransferase (418 aa).

Residue K199 is modified to N6-(pyridoxal phosphate)lysine.

This sequence belongs to the DegT/DnrJ/EryC1 family. L-glutamine:2-deoxy-scyllo-inosose/scyllo-inosose aminotransferase subfamily. It depends on pyridoxal 5'-phosphate as a cofactor.

The catalysed reaction is 3-amino-2,3-dideoxy-scyllo-inosose + L-glutamine = 2-deoxystreptamine + 2-oxoglutaramate. It participates in metabolic intermediate biosynthesis; 2-deoxystreptamine biosynthesis; 2-deoxystreptamine from D-glucose 6-phosphate: step 4/4. Its pathway is antibiotic biosynthesis; gentamicin biosynthesis. Functionally, catalyzes the transamination of 3-amino-2,3-dideoxy-scyllo-inosose (amino-DOI) into 2-deoxystreptamine (DOS). This chain is Putative L-glutamine:3-amino-2,3-dideoxy-scyllo-inosose aminotransferase (gtmD), found in Micromonospora echinospora (Micromonospora purpurea).